A 148-amino-acid polypeptide reads, in one-letter code: Ribonuclease pancreatic (148 aa).

Positions 1-25 (MGLEKSLILLPLLVLVFGWVQSSLG) are cleaved as a signal peptide. Residues K32 and R35 each contribute to the substrate site. The active-site Proton acceptor is H36. 4 disulfide bridges follow: C50–C108, C64–C119, C82–C134, and C89–C96. Residue N58 is glycosylated (N-linked (GlcNAc...) asparagine). Substrate is bound at residue 65-69 (KPVNT). Residue N86 is glycosylated (N-linked (GlcNAc...) asparagine). K90 and R109 together coordinate substrate. H143 (proton donor) is an active-site residue.

This sequence belongs to the pancreatic ribonuclease family. As to quaternary structure, monomer. Interacts with and forms tight 1:1 complexes with RNH1. Dimerization of two such complexes may occur. Interaction with RNH1 inhibits this protein. Pancreas.

The protein localises to the secreted. It carries out the reaction an [RNA] containing cytidine + H2O = an [RNA]-3'-cytidine-3'-phosphate + a 5'-hydroxy-ribonucleotide-3'-[RNA].. The catalysed reaction is an [RNA] containing uridine + H2O = an [RNA]-3'-uridine-3'-phosphate + a 5'-hydroxy-ribonucleotide-3'-[RNA].. Endonuclease that catalyzes the cleavage of RNA on the 3' side of pyrimidine nucleotides. Acts on single-stranded and double-stranded RNA. This is Ribonuclease pancreatic (RNASE1) from Chionomys nivalis (European snow vole).